The sequence spans 361 residues: Phosphoserine aminotransferase (361 aa).

Residue Arg42 coordinates L-glutamate. Pyridoxal 5'-phosphate is bound by residues 76-77, Trp102, Thr154, Asp173, and Gln196; that span reads GR. The residue at position 197 (Lys197) is an N6-(pyridoxal phosphate)lysine. 238–239 provides a ligand contact to pyridoxal 5'-phosphate; that stretch reads NT.

The protein belongs to the class-V pyridoxal-phosphate-dependent aminotransferase family. SerC subfamily. As to quaternary structure, homodimer. The cofactor is pyridoxal 5'-phosphate.

The protein resides in the cytoplasm. It catalyses the reaction O-phospho-L-serine + 2-oxoglutarate = 3-phosphooxypyruvate + L-glutamate. It carries out the reaction 4-(phosphooxy)-L-threonine + 2-oxoglutarate = (R)-3-hydroxy-2-oxo-4-phosphooxybutanoate + L-glutamate. It functions in the pathway amino-acid biosynthesis; L-serine biosynthesis; L-serine from 3-phospho-D-glycerate: step 2/3. It participates in cofactor biosynthesis; pyridoxine 5'-phosphate biosynthesis; pyridoxine 5'-phosphate from D-erythrose 4-phosphate: step 3/5. In terms of biological role, catalyzes the reversible conversion of 3-phosphohydroxypyruvate to phosphoserine and of 3-hydroxy-2-oxo-4-phosphonooxybutanoate to phosphohydroxythreonine. In Idiomarina loihiensis (strain ATCC BAA-735 / DSM 15497 / L2-TR), this protein is Phosphoserine aminotransferase.